Reading from the N-terminus, the 540-residue chain is Phosphoenolpyruvate carboxykinase (ATP) (540 aa).

Arginine 65 lines the substrate pocket. At lysine 87 the chain carries N6-acetyllysine. Substrate is bound by residues tyrosine 207 and lysine 213. ATP contacts are provided by residues lysine 213, histidine 232, and 248 to 256 (GLSGTGKTT). The Mn(2+) site is built by lysine 213 and histidine 232. Aspartate 269 provides a ligand contact to Mn(2+). ATP-binding positions include glutamate 297, arginine 333, 449–450 (RI), and threonine 455. A substrate-binding site is contributed by arginine 333. Lysine 523 is modified (N6-acetyllysine).

This sequence belongs to the phosphoenolpyruvate carboxykinase (ATP) family. Monomer. The cofactor is Mn(2+).

Its subcellular location is the cytoplasm. The enzyme catalyses oxaloacetate + ATP = phosphoenolpyruvate + ADP + CO2. Its pathway is carbohydrate biosynthesis; gluconeogenesis. Functionally, involved in the gluconeogenesis. Catalyzes the conversion of oxaloacetate (OAA) to phosphoenolpyruvate (PEP) through direct phosphoryl transfer between the nucleoside triphosphate and OAA. The protein is Phosphoenolpyruvate carboxykinase (ATP) of Escherichia coli O7:K1 (strain IAI39 / ExPEC).